We begin with the raw amino-acid sequence, 28 residues long: Cruzioseptin-10 (28 aa).

Expressed by the skin glands.

The protein resides in the secreted. Functionally, has antimicrobial activity. This chain is Cruzioseptin-10, found in Cruziohyla calcarifer (Splendid leaf frog).